We begin with the raw amino-acid sequence, 105 residues long: Nitrogen fixation nifHD region GlnB-like protein 1 (105 aa).

Belongs to the P(II) protein family.

Its function is as follows. Could be involved in the regulation of nitrogen fixation. In Methanothermobacter marburgensis (strain ATCC BAA-927 / DSM 2133 / JCM 14651 / NBRC 100331 / OCM 82 / Marburg) (Methanobacterium thermoautotrophicum), this protein is Nitrogen fixation nifHD region GlnB-like protein 1 (glnBA).